The sequence spans 597 residues: Putative lipase ATG15 (597 aa).

The Cytoplasmic segment spans residues 1–15 (MTLEKNRHANKGTSW). A helical; Signal-anchor for type II membrane protein membrane pass occupies residues 16–36 (TWMIYKFVVGVITVAILVLFI). At 37–597 (TQKSVSQAQD…DDDEDTFERK (561 aa)) the chain is on the lumenal side. Asparagine 195, asparagine 262, and asparagine 346 each carry an N-linked (GlcNAc...) asparagine glycan. The Charge relay system role is filled by serine 364. The N-linked (GlcNAc...) asparagine glycan is linked to asparagine 481. The interval 507 to 570 (EKDEPKLPNP…PTDQDPPKKC (64 aa)) is disordered. Over residues 519-554 (SSSKSTLSTKTTSLKSSSTYSGSTSSSTVTKTTQTS) the composition is skewed to low complexity.

Belongs to the AB hydrolase superfamily. Lipase family. In terms of assembly, binds to both phosphatidylinositol (PI) and phosphatidylinositol 3,5-bisphosphate (PIP2).

It localises to the endosome. The protein localises to the multivesicular body membrane. Its subcellular location is the prevacuolar compartment membrane. It carries out the reaction a triacylglycerol + H2O = a diacylglycerol + a fatty acid + H(+). In terms of biological role, lipase which is essential for lysis of subvacuolar cytoplasm to vacuole targeted bodies and intravacuolar autophagic bodies. Involved in the lysis of intravacuolar multivesicular body (MVB) vesicles. The intravacuolar membrane disintegration by ATG15 is critical to life span extension. This is Putative lipase ATG15 (ATG15) from Candida albicans (strain SC5314 / ATCC MYA-2876) (Yeast).